The primary structure comprises 443 residues: Xaa-Pro dipeptidase (443 aa).

The Mn(2+) site is built by D246, D257, H339, E384, and E423.

This sequence belongs to the peptidase M24B family. Bacterial-type prolidase subfamily. The cofactor is Mn(2+).

It carries out the reaction Xaa-L-Pro dipeptide + H2O = an L-alpha-amino acid + L-proline. In terms of biological role, splits dipeptides with a prolyl residue in the C-terminal position. The sequence is that of Xaa-Pro dipeptidase from Escherichia coli O157:H7.